A 560-amino-acid polypeptide reads, in one-letter code: Nuclear receptor subfamily 5 group A member 2 (560 aa).

Residues 21–55 are disordered; it reads IASAPGSETRHSPKREEQLREKRAGLPDRHRRPIP. Residues 28–48 show a composition bias toward basic and acidic residues; it reads ETRHSPKREEQLREKRAGLPD. Positions 104–175 form a DNA-binding region, nuclear receptor; that stretch reads EELCPVCGDK…KCIDVGMKLE (72 aa). The Zn(2+) site is built by C107, C110, C124, C127, C143, C149, C159, and C162. 2 consecutive NR C4-type zinc fingers follow at residues 107 to 127 and 143 to 167; these read CPVCGDKVSGYHYGLLTCESC and CIENQNCQIDKTQRKRCPYCRFKKC. The segment at 173–188 is C-terminal extension (CTE); sequence KLEAVRADRMRGGRNK. The short motif at 189 to 208 is the FTZ-F1 box element; the sequence is FGPMYKRDRALKQQKKALIR. Residue K289 forms a Glycyl lysine isopeptide (Lys-Gly) (interchain with G-Cter in SUMO1) linkage. The region spanning 319-558 is the NR LBD domain; sequence SIPHLILELL…NLLIEMLHAK (240 aa). Residues Y535 and K539 each coordinate a phospholipid derivative. Residues 547–558 are AF-2; it reads YNNLLIEMLHAK.

The protein belongs to the nuclear hormone receptor family. NR5 subfamily. Monomer; Binds DNA as a monomer. Interacts with nuclear receptor corepressors NR0B1 and NR0B2; repressing NR5A2 nuclear receptor activity. Interacts with nuclear receptor coactivators CTNNB1, PPARGC1A and NCOA2; interaction takes place following ligand-binding and promotes target gene activation. Interacts (when sumoylated) with GPS2; interaction with GPS2 onto hepatic acute phase protein promoters prevents N-Cor corepressor complex dissociation. Interacts with HNF1A. Interacts with GRIP1. In terms of processing, sumoylated by SUMO1 at Lys-289 during the hepatic acute phase response, leading to promote interaction with GPS2 and prevent N-Cor corepressor complex dissociation.

Its subcellular location is the nucleus. It is found in the chromosome. Its function is as follows. Orphan nuclear receptor that binds DNA as a monomer to the 5'-TCAAGGCCA-3' sequence and controls expression of target genes: regulates key biological processes, such as early embryonic development, cholesterol and bile acid synthesis pathways, as well as liver and pancreas morphogenesis. Ligand-binding causes conformational change which causes recruitment of coactivators, promoting target gene activation. The specific ligand is unknown, but specific phospholipids, such as phosphatidylethanolamine, phosphatidylserine, dilauroyl phosphatidylcholine and diundecanoyl phosphatidylcholine can act as ligand in vitro. Acts as a pioneer transcription factor, which unwraps target DNA from histones and elicits local opening of closed chromatin. Plays a central role during preimplantation stages of embryonic development. Plays a minor role in zygotic genome activation (ZGA) by regulating a small set of two-cell stage genes. Plays a major role in morula development (2-16 cells embryos) by acting as a master regulator at the 8-cell stage, controlling expression of lineage-specifying transcription factors and genes involved in mitosis, telomere maintenance and DNA repair. Zygotic NR5A2 binds to both closed and open chromatin with other transcription factors, often at SINE B1/Alu repeats DNA elements, promoting chromatin accessibility at nearby regulatory regions. Also involved in the epiblast stage of development and embryonic stem cell pluripotency, by promoting expression of POU5F1/OCT4. Regulates other processes later in development, such as formation of connective tissue in lower jaw and middle ear, neural stem cell differentiation, ovarian follicle development and Sertoli cell differentiation. Involved in exocrine pancreas development and acinar cell differentiation. Acts as an essential transcriptional regulator of lipid metabolism. Key regulator of cholesterol 7-alpha-hydroxylase gene (CYP7A) expression in liver. Activates the transcription of CYP2C38. Also acts as a negative regulator of inflammation in different organs, such as intestine, liver and pancreas. Protects against intestinal inflammation via its ability to regulate glucocorticoid production. Plays an anti-inflammatory role during the hepatic acute phase response by acting as a corepressor: inhibits the hepatic acute phase response by preventing dissociation of the N-Cor corepressor complex. Acts as a regulator of immunity by promoting lymphocyte T-cell development, proliferation and effector functions. Also involved in resolution of endoplasmic reticulum stress in the liver. The polypeptide is Nuclear receptor subfamily 5 group A member 2 (Mus musculus (Mouse)).